The sequence spans 217 residues: MOB kinase activator 3A (217 aa).

Residues Cys83, Cys88, His165, and His170 each coordinate Zn(2+).

It belongs to the MOB1/phocein family.

In terms of biological role, may regulate the activity of kinases. In Pongo abelii (Sumatran orangutan), this protein is MOB kinase activator 3A (MOB3A).